A 761-amino-acid chain; its full sequence is Phosphoribosylformylglycinamidine synthase subunit PurL (761 aa).

The span at 1 to 16 (MTGNPAAPAATSVSPP) shows a compositional bias: low complexity. The tract at residues 1–21 (MTGNPAAPAATSVSPPAEQPY) is disordered. H57 is a catalytic residue. ATP-binding residues include Y60 and K101. E103 serves as a coordination point for Mg(2+). Residues 104 to 107 (SHNH) and R126 each bind substrate. H105 (proton acceptor) is an active-site residue. D127 serves as a coordination point for Mg(2+). Q252 contributes to the substrate binding site. D280 contacts Mg(2+). 329–331 (ESQ) contacts substrate. The ATP site is built by N519 and G556. N557 contributes to the Mg(2+) binding site. S559 serves as a coordination point for substrate.

It belongs to the FGAMS family. In terms of assembly, monomer. Part of the FGAM synthase complex composed of 1 PurL, 1 PurQ and 2 PurS subunits.

The protein resides in the cytoplasm. It carries out the reaction N(2)-formyl-N(1)-(5-phospho-beta-D-ribosyl)glycinamide + L-glutamine + ATP + H2O = 2-formamido-N(1)-(5-O-phospho-beta-D-ribosyl)acetamidine + L-glutamate + ADP + phosphate + H(+). It functions in the pathway purine metabolism; IMP biosynthesis via de novo pathway; 5-amino-1-(5-phospho-D-ribosyl)imidazole from N(2)-formyl-N(1)-(5-phospho-D-ribosyl)glycinamide: step 1/2. Part of the phosphoribosylformylglycinamidine synthase complex involved in the purines biosynthetic pathway. Catalyzes the ATP-dependent conversion of formylglycinamide ribonucleotide (FGAR) and glutamine to yield formylglycinamidine ribonucleotide (FGAM) and glutamate. The FGAM synthase complex is composed of three subunits. PurQ produces an ammonia molecule by converting glutamine to glutamate. PurL transfers the ammonia molecule to FGAR to form FGAM in an ATP-dependent manner. PurS interacts with PurQ and PurL and is thought to assist in the transfer of the ammonia molecule from PurQ to PurL. The chain is Phosphoribosylformylglycinamidine synthase subunit PurL from Frankia casuarinae (strain DSM 45818 / CECT 9043 / HFP020203 / CcI3).